The primary structure comprises 326 residues: Small ribosomal subunit protein RACK1x (326 aa).

WD repeat units lie at residues 13–53, 61–100, 103–142, 147–188, 191–230, 232–270, and 290–326; these read AHTD…KSYG, GHSH…TTRR, GHTK…KYTI, GHKE…LRNS, GHSG…KLYS, EAGS…VVED, and NQKK…IGRY.

The protein belongs to the WD repeat G protein beta family. Ribosomal protein RACK1 subfamily. In terms of assembly, homodimer and heterodimer with RACK1A or RACK1B. Interacts with GB1, MEKK1, MKK4, MKK5, MPK3 and MPK6, but not with GPA1 or MPK4. Widely expressed.

Its function is as follows. Minor component of the RACK1 regulatory proteins that play a role in multiple signal transduction pathways. Involved in multiple hormone responses and developmental processes. MAPK cascade scaffolding protein involved in the protease IV and ArgC signaling pathway but not the flg22 pathway. This is Small ribosomal subunit protein RACK1x from Arabidopsis thaliana (Mouse-ear cress).